Here is a 314-residue protein sequence, read N- to C-terminus: Homoserine O-acetyltransferase (314 aa).

Cys142 functions as the Acyl-thioester intermediate in the catalytic mechanism. Substrate is bound by residues Lys163 and Ser192. His235 serves as the catalytic Proton acceptor. The active site involves Glu237. Residue Arg249 participates in substrate binding.

Belongs to the MetA family.

The protein localises to the cytoplasm. The catalysed reaction is L-homoserine + acetyl-CoA = O-acetyl-L-homoserine + CoA. The protein operates within amino-acid biosynthesis; L-methionine biosynthesis via de novo pathway; O-acetyl-L-homoserine from L-homoserine: step 1/1. Functionally, transfers an acetyl group from acetyl-CoA to L-homoserine, forming acetyl-L-homoserine. In Streptococcus pneumoniae serotype 4 (strain ATCC BAA-334 / TIGR4), this protein is Homoserine O-acetyltransferase.